Consider the following 1129-residue polypeptide: ISWI chromatin-remodeling complex ATPase ISW1 (1129 aa).

A disordered region spans residues 144 to 177 (KANGKGKGKHQDVRRRKTEHEEDAELLKEEDSDD). Basic residues predominate over residues 147–160 (GKGKGKHQDVRRRK). Positions 164–177 (EEDAELLKEEDSDD) are enriched in acidic residues. A Helicase ATP-binding domain is found at 208–373 (VSLHKNKIAG…WALLNFLLPD (166 aa)). 221 to 228 (DEMGLGKT) is an ATP binding site. A DEAH box motif is present at residues 324–327 (DEAH). The Helicase C-terminal domain occupies 506 to 657 (VLDKLLKKLK…QLVIQQNRTS (152 aa)). Positions 683–705 (FKSGTSTGSAGTPEPGSGEKGDD) are disordered. Thr-694 bears the Phosphothreonine mark. Ser-846 bears the Phosphoserine mark. SANT domains are found at residues 882–935 (EGFT…SNIE) and 988–1052 (NKRT…LLQC). The segment covering 1073 to 1108 (KEDENGKRIREEFADQTANEKENVDGVESKKAKIED) has biased composition (basic and acidic residues). Residues 1073–1129 (KEDENGKRIREEFADQTANEKENVDGVESKKAKIEDTSNVGTEQLVAEKIPENETTH) are disordered.

The protein belongs to the SNF2/RAD54 helicase family. ISWI subfamily. Component of the ISW1A complex, which at least consists of ISW1 and IOC3. Component of the ISW1B complex, which at least consists of ISW1, IOC2 and IOC4.

It localises to the nucleus. Catalytic component of ISW1-type complexes, which act by remodeling the chromatin by catalyzing an ATP-dependent alteration in the structure of nucleosomal DNA. They are involved in coordinating transcriptional repression, activation and elongation phases. The ISW1A complex represses gene expression at initiation through specific positioning of a promoter proximal dinucleosome. The ISW1B complex acts within coding regions to control the amount of RNA polymerase II released into productive elongation and to coordinate elongation with termination and pre-mRNA processing. The chain is ISWI chromatin-remodeling complex ATPase ISW1 (ISW1) from Saccharomyces cerevisiae (strain ATCC 204508 / S288c) (Baker's yeast).